A 247-amino-acid chain; its full sequence is Probable transcriptional regulatory protein Dalk_2958 (247 aa).

It belongs to the TACO1 family.

It is found in the cytoplasm. This is Probable transcriptional regulatory protein Dalk_2958 from Desulfatibacillum aliphaticivorans.